The primary structure comprises 257 residues: Acyl-[acyl-carrier-protein]--UDP-N-acetylglucosamine O-acyltransferase (257 aa).

The protein belongs to the transferase hexapeptide repeat family. LpxA subfamily. Homotrimer.

Its subcellular location is the cytoplasm. It carries out the reaction a (3R)-hydroxyacyl-[ACP] + UDP-N-acetyl-alpha-D-glucosamine = a UDP-3-O-[(3R)-3-hydroxyacyl]-N-acetyl-alpha-D-glucosamine + holo-[ACP]. It participates in glycolipid biosynthesis; lipid IV(A) biosynthesis; lipid IV(A) from (3R)-3-hydroxytetradecanoyl-[acyl-carrier-protein] and UDP-N-acetyl-alpha-D-glucosamine: step 1/6. Involved in the biosynthesis of lipid A, a phosphorylated glycolipid that anchors the lipopolysaccharide to the outer membrane of the cell. This is Acyl-[acyl-carrier-protein]--UDP-N-acetylglucosamine O-acyltransferase from Anaeromyxobacter dehalogenans (strain 2CP-1 / ATCC BAA-258).